The primary structure comprises 484 residues: Protein LAZ1 homolog 1 (484 aa).

An N-terminal signal peptide occupies residues 1 to 19; it reads MEWRGILCSLLFIVSVGES. 6 helical membrane-spanning segments follow: residues 42–62, 76–96, 190–210, 219–239, 264–284, and 299–319; these read PILSASVFVVIAILLPMYLIF, FLIGLILMVPVYAVESFLSLV, MILKMICALLAMILEAFGVYG, GYPYLAVVLNFSQTWALYCLV, IVFLTWWQGIIVAFLFSMGLV, and YIICIEMGIAAVVHLYVFPAA. A disordered region spans residues 344–364; the sequence is PDPEEVKDSERTTRTRYGRHD. Basic and acidic residues predominate over residues 347-364; sequence EEVKDSERTTRTRYGRHD. Residues 406–428 adopt a coiled-coil conformation; that stretch reads IAKINRTFHQISENVKRFEQQKK. Residues 459–484 are disordered; that stretch reads VSDSGLGSTNRHHQSRVSGLWTRMRR.

It belongs to the TMEM184 family.

It is found in the membrane. This chain is Protein LAZ1 homolog 1, found in Arabidopsis thaliana (Mouse-ear cress).